Consider the following 374-residue polypeptide: MEKERLIAIRRDLHRIPEIGFQEYKTQQYLLNLLNQYPEERIEIETWRTGIFVKVNGTAPEKMLAYRADIDALSIEEQTGLPFASEHPGFMHACGHDMHMTIALGIIDHFVHHPVKHDLLFLFQPAEEGPGGAEPMLESDVLKKWTPDLITALHIAPELPVGTISTKSGLLFANTSELVIDLEGKGGHAAYPHTADDMVVAASTLVTQLQTVISRNTDPLDSAVITVGTITGGTAQNIIAEHAHLEGTIRTLSEESMRMVKKRIEELVKGIEIGFRCKGKVTYPSVYHQVYNTSGLTEEFMQFVSDHQLADVRTAKEAMTGEDFGYMLKKYPGFMFWLGADSSHGLHHAKLNPDEDAMETAVNVMVGYFSKYAN.

Asp-69 is an active-site residue. The active-site Proton acceptor is the Glu-128.

Belongs to the peptidase M20A family. N-acetyldiaminopimelate deacetylase subfamily.

It carries out the reaction N-acetyl-(2S,6S)-2,6-diaminopimelate + H2O = (2S,6S)-2,6-diaminopimelate + acetate. It participates in amino-acid biosynthesis; L-lysine biosynthesis via DAP pathway; LL-2,6-diaminopimelate from (S)-tetrahydrodipicolinate (acetylase route): step 3/3. Functionally, catalyzes the conversion of N-acetyl-diaminopimelate to diaminopimelate and acetate. This is N-acetyldiaminopimelate deacetylase from Bacillus velezensis (strain DSM 23117 / BGSC 10A6 / LMG 26770 / FZB42) (Bacillus amyloliquefaciens subsp. plantarum).